The chain runs to 330 residues: Phosphate acyltransferase (330 aa).

This sequence belongs to the PlsX family. Homodimer. Probably interacts with PlsY.

It is found in the cytoplasm. It carries out the reaction a fatty acyl-[ACP] + phosphate = an acyl phosphate + holo-[ACP]. The protein operates within lipid metabolism; phospholipid metabolism. Functionally, catalyzes the reversible formation of acyl-phosphate (acyl-PO(4)) from acyl-[acyl-carrier-protein] (acyl-ACP). This enzyme utilizes acyl-ACP as fatty acyl donor, but not acyl-CoA. The protein is Phosphate acyltransferase of Lactobacillus delbrueckii subsp. bulgaricus (strain ATCC 11842 / DSM 20081 / BCRC 10696 / JCM 1002 / NBRC 13953 / NCIMB 11778 / NCTC 12712 / WDCM 00102 / Lb 14).